The sequence spans 84 residues: Small ribosomal subunit protein uS17 (84 aa).

It belongs to the universal ribosomal protein uS17 family. Part of the 30S ribosomal subunit.

Its function is as follows. One of the primary rRNA binding proteins, it binds specifically to the 5'-end of 16S ribosomal RNA. The protein is Small ribosomal subunit protein uS17 of Alkaliphilus metalliredigens (strain QYMF).